The primary structure comprises 54 residues: Conotoxin mr5.4b (54 aa).

The first 14 residues, 1 to 14 (ILLLLIASAPSVDA), serve as a signal peptide directing secretion. The propeptide occupies 15–40 (QLKTKDDVPLASFHANVKRTLQKLLN). Glutamate 52 carries the post-translational modification 4-carboxyglutamate.

It belongs to the conotoxin T superfamily. In terms of processing, contains 2 disulfide bonds that can be either 'C1-C3, C2-C4' or 'C1-C4, C2-C3', since these disulfide connectivities have been observed for conotoxins with cysteine framework V (for examples, see AC P0DQQ7 and AC P81755). As to expression, expressed by the venom duct.

It is found in the secreted. This Conus marmoreus (Marble cone) protein is Conotoxin mr5.4b.